Here is a 416-residue protein sequence, read N- to C-terminus: tRNA (guanine-N(7)-)-methyltransferase non-catalytic subunit wuho (416 aa).

Positions 47-88 (TQSQESCPATATSTTAGKEPGGKEQQLAKQPEEGGTSASGSV) are disordered. The segment covering 49–62 (SQESCPATATSTTA) has biased composition (polar residues). WD repeat units lie at residues 89–130 (ATST…ARLL), 177–216 (GHLS…DIHS), 220–258 (GHRE…ELLQ), and 317–357 (AGSW…PTTN).

This sequence belongs to the WD repeat TRM82 family. In terms of assembly, forms a heterodimer with the catalytic subunit Mettl1. Interacts with mei-P26 and weakly interacts with bgcn; required for the function or formation of the mei-P26-bgcn-bam-sxl complex. Interacts with nanos; may be involved in mei-P26-dependent derepression of the BMP signaling pathway. Interacts with Myc; the interaction may be mediated by mei-P26 and may be involved in the regulation of ribosome biogenesis. In testis, it is present at high level in hub cells, a niche for germline stem cells of testis. Ubiquitously expressed in all testicular cells throughout spermatogenesis. Ubiquitously expressed in all germline and somatic cells of the ovary.

It is found in the nucleus. The protein resides in the cytoplasm. The protein operates within tRNA modification; N(7)-methylguanine-tRNA biosynthesis. Functionally, required for the Mettl1-dependent formation of N(7)-methylguanine at position 46 (m7G46) in tRNA. In the Mettl1-wuho methyltransferase complex, it is required to stabilize and induce conformational changes of the catalytic subunit. Required for binding of nanos mRNA and repression of translation by the mei-P26-bgcn-bam-sxl complex. May cooperate with mei-P26 and nanos to derepress the BMP signaling pathway. May cooperate with mei-P26 to suppress expression of a subset of microRNAs. May cooperate with mei-P26 to regulate bam expression levels in germline cells during gametogenesis. Required to promote mitosis to meiosis transition during gametogenesis. May regulate germline cell division in part by regulating ribosome biogenesis. This Drosophila erecta (Fruit fly) protein is tRNA (guanine-N(7)-)-methyltransferase non-catalytic subunit wuho.